Reading from the N-terminus, the 131-residue chain is Transcription antitermination protein NusB (131 aa).

It belongs to the NusB family.

Functionally, involved in transcription antitermination. Required for transcription of ribosomal RNA (rRNA) genes. Binds specifically to the boxA antiterminator sequence of the ribosomal RNA (rrn) operons. This is Transcription antitermination protein NusB from Caldicellulosiruptor saccharolyticus (strain ATCC 43494 / DSM 8903 / Tp8T 6331).